We begin with the raw amino-acid sequence, 376 residues long: Glutamate 5-kinase (376 aa).

Residue Lys-15 participates in ATP binding. 3 residues coordinate substrate: Ser-55, Asp-142, and Asn-154. ATP contacts are provided by residues 174-175 (TD) and 216-222 (TGGMATK). Positions 281–359 (AGKVLVDAGA…AEIEQLLGYR (79 aa)) constitute a PUA domain.

This sequence belongs to the glutamate 5-kinase family.

It localises to the cytoplasm. The enzyme catalyses L-glutamate + ATP = L-glutamyl 5-phosphate + ADP. The protein operates within amino-acid biosynthesis; L-proline biosynthesis; L-glutamate 5-semialdehyde from L-glutamate: step 1/2. In terms of biological role, catalyzes the transfer of a phosphate group to glutamate to form L-glutamate 5-phosphate. The sequence is that of Glutamate 5-kinase from Trichlorobacter lovleyi (strain ATCC BAA-1151 / DSM 17278 / SZ) (Geobacter lovleyi).